Here is a 118-residue protein sequence, read N- to C-terminus: Myotrophin (118 aa).

ANK repeat units follow at residues 1-30 (MGDKEFMWALKNGDLDAVKEFVAGGVDVNR), 34-65 (GGRKPLHYAADCGQDEIVEFLLAKGANINAAD), and 67-98 (HGITPLLSACYEGHRKCVELFVSKGADKNVKG).

It belongs to the myotrophin family.

It localises to the cytoplasm. The protein resides in the nucleus. It is found in the perinuclear region. Its function is as follows. Regulates NF-kappa-B transcription factor activity. Promotes growth of cardiomyocytes, but not cardiomyocyte proliferation. Promotes cardiac muscle hypertrophy. Plays a role in the regulation of the growth of actin filaments. Inhibits the activity of the F-actin-capping protein complex. In Xenopus laevis (African clawed frog), this protein is Myotrophin (mtpn).